The chain runs to 96 residues: Putative pterin-4-alpha-carbinolamine dehydratase (96 aa).

It belongs to the pterin-4-alpha-carbinolamine dehydratase family.

It carries out the reaction (4aS,6R)-4a-hydroxy-L-erythro-5,6,7,8-tetrahydrobiopterin = (6R)-L-erythro-6,7-dihydrobiopterin + H2O. In Prochlorococcus marinus (strain MIT 9215), this protein is Putative pterin-4-alpha-carbinolamine dehydratase.